A 315-amino-acid chain; its full sequence is Outer membrane protease OmpP (315 aa).

A signal peptide spans 1-23 (MQTKLLAIMLAAPVVFSSQEASA). Catalysis depends on residues Asp103, Asp105, Asp230, and His232.

This sequence belongs to the peptidase A26 family.

It is found in the cell outer membrane. Protease; also acts as a receptor for bacteriophage Ox2. In Escherichia coli (strain K12), this protein is Outer membrane protease OmpP (ompP).